The primary structure comprises 347 residues: Biotin synthase (347 aa).

The Radical SAM core domain maps to 40 to 258; sequence AQVQVSTLLS…IAVARIAMPR (219 aa). [4Fe-4S] cluster-binding residues include cysteine 55, cysteine 59, and cysteine 62. [2Fe-2S] cluster-binding residues include cysteine 99, cysteine 130, cysteine 190, and arginine 262.

Belongs to the radical SAM superfamily. Biotin synthase family. In terms of assembly, homodimer. It depends on [4Fe-4S] cluster as a cofactor. [2Fe-2S] cluster serves as cofactor.

The catalysed reaction is (4R,5S)-dethiobiotin + (sulfur carrier)-SH + 2 reduced [2Fe-2S]-[ferredoxin] + 2 S-adenosyl-L-methionine = (sulfur carrier)-H + biotin + 2 5'-deoxyadenosine + 2 L-methionine + 2 oxidized [2Fe-2S]-[ferredoxin]. It functions in the pathway cofactor biosynthesis; biotin biosynthesis; biotin from 7,8-diaminononanoate: step 2/2. Catalyzes the conversion of dethiobiotin (DTB) to biotin by the insertion of a sulfur atom into dethiobiotin via a radical-based mechanism. This is Biotin synthase from Stenotrophomonas maltophilia (strain K279a).